We begin with the raw amino-acid sequence, 211 residues long: Pyridoxine/pyridoxamine 5'-phosphate oxidase (211 aa).

Residues 7–10 (RREY) and lysine 65 contribute to the substrate site. FMN contacts are provided by residues 60 to 65 (RIVLLK), 75 to 76 (FT), lysine 82, and glutamine 104. Substrate-binding residues include tyrosine 122, arginine 126, and serine 130. Residues 139 to 140 (QS) and tryptophan 184 contribute to the FMN site. 190-192 (RLH) serves as a coordination point for substrate. Arginine 194 lines the FMN pocket.

This sequence belongs to the pyridoxamine 5'-phosphate oxidase family. Homodimer. FMN serves as cofactor.

The catalysed reaction is pyridoxamine 5'-phosphate + O2 + H2O = pyridoxal 5'-phosphate + H2O2 + NH4(+). It catalyses the reaction pyridoxine 5'-phosphate + O2 = pyridoxal 5'-phosphate + H2O2. It participates in cofactor metabolism; pyridoxal 5'-phosphate salvage; pyridoxal 5'-phosphate from pyridoxamine 5'-phosphate: step 1/1. It functions in the pathway cofactor metabolism; pyridoxal 5'-phosphate salvage; pyridoxal 5'-phosphate from pyridoxine 5'-phosphate: step 1/1. Functionally, catalyzes the oxidation of either pyridoxine 5'-phosphate (PNP) or pyridoxamine 5'-phosphate (PMP) into pyridoxal 5'-phosphate (PLP). In Teredinibacter turnerae (strain ATCC 39867 / T7901), this protein is Pyridoxine/pyridoxamine 5'-phosphate oxidase.